The sequence spans 1663 residues: Complement C3 (1663 aa).

Positions 1-24 are cleaved as a signal peptide; it reads MGPASGSQLLVLLLLLASSPLALG. Phosphoserine is present on Ser40. 13 disulfide bridges follow: Cys559/Cys816, Cys626/Cys661, Cys693/Cys720, Cys694/Cys727, Cys707/Cys728, Cys873/Cys1513, Cys1101/Cys1158, Cys1358/Cys1489, Cys1389/Cys1458, Cys1506/Cys1511, Cys1518/Cys1590, Cys1537/Cys1661, and Cys1637/Cys1646. Ser671 carries the phosphoserine modification. The region spanning 693 to 728 is the Anaphylatoxin-like domain; the sequence is CCEDGMRDIPMRYSCQRRARLITQGENCIKAFIDCC. Asn939 carries N-linked (GlcNAc...) asparagine glycosylation. At Ser968 the chain carries Phosphoserine. Positions 1010 to 1013 form a cross-link, isoglutamyl cysteine thioester (Cys-Gln); it reads CGEQ. The residue at position 1321 (Ser1321) is a Phosphoserine. The NTR domain occupies 1518–1661; the sequence is CFMQQSQEKI…FTESMVVYGC (144 aa). A Phosphoserine modification is found at Ser1573. N-linked (GlcNAc...) asparagine glycosylation is present at Asn1617. Residues 1634–1659 form an interaction with CFP/properdin region; the sequence is AEECQDQKYQKQCEELGAFTESMVVY.

As to quaternary structure, in absence of complement activation, the C3 precursor is first processed by the removal of 4 Arg residues, forming two chains, beta and alpha, linked by a disulfide bond. Complement C3b is composed of complement C3b and complement C3 beta chains that are associated via disulfide bonds. Non-enzymatic component of the C5 convertase, also named C4bC2bC3b, composed of the serine protease complement C2b (C2), complement C3b, as well as complement C4b (C4). Non-enzymatic component of the C5 convertase of the alternative complement pathways composed of the serine protease complement CFB and complement C3b. Interacts with CFP; interaction takes place together with CFB in the alternative complement system and allows the complex to become active. Interacts with CR1 (via Sushi 8 and Sushi 9 domains). Interacts with CFH. In terms of assembly, interacts with CFH. Interacts with CR2. As to quaternary structure, during pregnancy, C3dg exists as a complex (probably a 2:2:2 heterohexamer) with AGT and the proform of PRG2. Interacts with CR2 (via the N-terminal Sushi domains 1 and 2). C3 precursor is first processed by the removal of 4 Arg residues, forming two chains, beta and alpha, linked by a disulfide bond. During activation of the complement systems, the alpha chain is cleaved into C3a and C3b by the C3 convertase: C3b stays linked to the beta chain, while C3a is released in the plasma. The alpha chain is cleaved by the serine protease complement C2b component of the C3 convertase to generate C3a and C3b following activation by the classical, lectin and GZMK complement systems. The alpha chain is cleaved by CFB component of the C3 convertase to generate C3a and C3b following activation by the alternative complement system. In terms of processing, C3a is further processed by carboxypeptidases to release the C-terminal arginine residue generating the acylation stimulating protein (ASP). Levels of ASP are increased in adipocytes in the postprandial period and by insulin and dietary chylomicrons. Post-translationally, complement C3b is rapidly split in two positions by factor I (CFI) and a cofactor (CFH) to form iC3b (inactivated C3b) and C3f which is released. CFI and CFH catalyze proteolytic degradation of already-deposited complement C3b. Then iC3b is slowly cleaved (possibly by CFI) to form C3c (beta chain + alpha' chain fragment 1 + alpha' chain fragment 2), C3dg and C3f. Other proteases produce other fragments such as C3d or C3g. Upon activation, the internal thioester bond reacts with carbohydrate antigens on the target surface to form amide or ester bonds, leading to covalent association with the surface of pathogens. In terms of processing, complement C3b interacts with complement C4b via a thioester linkage. Post-translationally, phosphorylated by FAM20C in the extracellular medium.

Its subcellular location is the secreted. The protein resides in the cell surface. With respect to regulation, complement activation is inhibited by VSIG4. Precursor of non-enzymatic components of the classical, alternative, lectin and GZMK complement pathways, which consist in a cascade of proteins that leads to phagocytosis and breakdown of pathogens and signaling that strengthens the adaptive immune system. In terms of biological role, non-enzymatic component of C5 convertase. Generated following cleavage by C3 convertase, it covalently attaches to the surface of pathogens, where it acts as an opsonin that marks the surface of antigens for removal. Complement C3b binds covalently via its reactive thioester, to cell surface carbohydrates or immune aggregates. Together with complement C4b, it then recruits the serine protease complement C2b to form the C5 convertase, which cleaves and activate C5, the next component of the complement pathways. In the alternative complement pathway, recruits the serine protease CFB to form the C5 convertase that cleaves and activates C5. Its function is as follows. Mediator of local inflammatory process released following cleavage by C3 convertase. Acts by binding to its receptor, C3AR1, activating G protein-coupled receptor signaling, promoting the phosphorylation, ARRB2-mediated internalization and endocytosis of C3AR1. C3a anaphylatoxin stimulates the activation of immune cells such as mast cells and basophilic leukocytes to release inflammation agents, such as cytokines, chemokines and histamine, which promote inflammation development. Also acts as potent chemoattractant for the migration of macrophages and neutrophils to the inflamed tissues, resulting in neutralization of the inflammatory triggers by multiple ways, such as phagocytosis and generation of reactive oxidants. Functionally, adipogenic hormone that stimulates triglyceride synthesis and glucose transport in adipocytes, regulating fat storage and playing a role in postprandial triglyceride clearance. Appears to stimulate triglyceride synthesis via activation of the PLC, MAPK and AKT signaling pathways. Acts by binding to its receptor, C5AR2, activating G protein-coupled receptor signaling, promoting the phosphorylation, ARRB2-mediated internalization and endocytosis of C5AR2. Acts as a chemoattractant for neutrophils in chronic inflammation. The protein is Complement C3 of Mus musculus (Mouse).